A 299-amino-acid chain; its full sequence is Cytidine deaminase (299 aa).

CMP/dCMP-type deaminase domains lie at 56-176 (SKIE…FGPK) and 194-299 (LQGD…YIAV). Substrate is bound at residue 97–99 (NQE). H110 contributes to the Zn(2+) binding site. Catalysis depends on E112, which acts as the Proton donor. Zn(2+) contacts are provided by C137 and C140.

Belongs to the cytidine and deoxycytidylate deaminase family. Homodimer. Requires Zn(2+) as cofactor.

It carries out the reaction cytidine + H2O + H(+) = uridine + NH4(+). The catalysed reaction is 2'-deoxycytidine + H2O + H(+) = 2'-deoxyuridine + NH4(+). Its function is as follows. This enzyme scavenges exogenous and endogenous cytidine and 2'-deoxycytidine for UMP synthesis. This is Cytidine deaminase from Haemophilus ducreyi (strain 35000HP / ATCC 700724).